A 515-amino-acid chain; its full sequence is MGDWNLLGDTLEEVHIHSTMIGKIWLTILFIFRMLVLGVAAEDVWNDEQSGFICNTEQPGCRNVCYDQAFPISLIRYWVLQVIFVSSPSLVYMGHALYRLRVLEEERQRMKAQLRVELEEVEFEMPRDRRRLEQELCQLEKRKLNKAPLRGTLLCTYVIHIFTRSVVEVGFMIGQYLLYGFHLEPLFKCHGHPCPNIIDCFVSRPTEKTIFLLFMQSIATISLFLNILEIFHLGFKKIKRGLWGKYKLKKEHNEFHANKAKQNVAKYQSTSANSLKRLPSAPDYNLLVEKQTHTAVYPSLNSSSVFQPNPDNHSVNDEKCILDEQETVLSNEISTLSTSCSHFQHISSNNNKDTHKIFGKELNGNQLMEKRETEGKDSKRNYYSRGHRSIPGVAIDGENNMRQSPQTVFSLPANCDWKPRWLRATWGSSTEHENRGSPPKGNLKGQFRKGTVRTLPPSQGDSQSLDIPNTADSLGGLSFEPGLVRTCNNPVCPPNHVVSLTNNLIGRRVPTDLQI.

The Cytoplasmic portion of the chain corresponds to 1–19 (MGDWNLLGDTLEEVHIHST). A helical transmembrane segment spans residues 20–40 (MIGKIWLTILFIFRMLVLGVA). Over 41 to 77 (AEDVWNDEQSGFICNTEQPGCRNVCYDQAFPISLIRY) the chain is Extracellular. The chain crosses the membrane as a helical span at residues 78-98 (WVLQVIFVSSPSLVYMGHALY). The Cytoplasmic portion of the chain corresponds to 99 to 166 (RLRVLEEERQ…YVIHIFTRSV (68 aa)). A helical membrane pass occupies residues 167–187 (VEVGFMIGQYLLYGFHLEPLF). Residues 188–209 (KCHGHPCPNIIDCFVSRPTEKT) lie on the Extracellular side of the membrane. A helical membrane pass occupies residues 210–230 (IFLLFMQSIATISLFLNILEI). Residues 231–515 (FHLGFKKIKR…GRRVPTDLQI (285 aa)) lie on the Cytoplasmic side of the membrane. The segment covering 370–380 (KRETEGKDSKR) has biased composition (basic and acidic residues). Disordered regions lie at residues 370–400 (KRETEGKDSKRNYYSRGHRSIPGVAIDGENN) and 428–472 (SSTE…NTAD). The segment covering 456–472 (PPSQGDSQSLDIPNTAD) has biased composition (polar residues).

This sequence belongs to the connexin family. Alpha-type (group II) subfamily. A connexon is composed of a hexamer of connexins. In terms of tissue distribution, highly abundant in skeletal muscle. Also detected in testis.

It is found in the cell membrane. The protein localises to the cell junction. It localises to the gap junction. Its function is as follows. One gap junction consists of a cluster of closely packed pairs of transmembrane channels, the connexons, through which materials of low MW diffuse from one cell to a neighboring cell. The chain is Gap junction alpha-9 protein (GJA9) from Homo sapiens (Human).